Reading from the N-terminus, the 470-residue chain is Aromatic amino acid aminotransferase C569.07 (470 aa).

This sequence belongs to the class-I pyridoxal-phosphate-dependent aminotransferase family. Pyridoxal 5'-phosphate serves as cofactor.

The protein localises to the cytoplasm. It catalyses the reaction an aromatic L-alpha-amino acid + 2-oxoglutarate = an aromatic oxo-acid + L-glutamate. In terms of biological role, has aromatic amino acid transaminase activity. The chain is Aromatic amino acid aminotransferase C569.07 from Schizosaccharomyces pombe (strain 972 / ATCC 24843) (Fission yeast).